The chain runs to 378 residues: UPF0754 membrane protein Bcer98_0694 (378 aa).

The helical transmembrane segment at 358–378 threads the bilayer; it reads LGALLGGTIGLMQGILLLFLM.

It belongs to the UPF0754 family.

The protein localises to the cell membrane. The polypeptide is UPF0754 membrane protein Bcer98_0694 (Bacillus cytotoxicus (strain DSM 22905 / CIP 110041 / 391-98 / NVH 391-98)).